The chain runs to 367 residues: Peptide chain release factor 2 (367 aa).

Glutamine 254 carries the post-translational modification N5-methylglutamine.

The protein belongs to the prokaryotic/mitochondrial release factor family. Post-translationally, methylated by PrmC. Methylation increases the termination efficiency of RF2.

Its subcellular location is the cytoplasm. In terms of biological role, peptide chain release factor 2 directs the termination of translation in response to the peptide chain termination codons UGA and UAA. This Aromatoleum aromaticum (strain DSM 19018 / LMG 30748 / EbN1) (Azoarcus sp. (strain EbN1)) protein is Peptide chain release factor 2.